A 301-amino-acid polypeptide reads, in one-letter code: Putative S-adenosyl-L-methionine-dependent methyltransferase MMAR_4850 (301 aa).

Residues D127 and 156–157 (DL) contribute to the S-adenosyl-L-methionine site.

The protein belongs to the UPF0677 family.

Exhibits S-adenosyl-L-methionine-dependent methyltransferase activity. This chain is Putative S-adenosyl-L-methionine-dependent methyltransferase MMAR_4850, found in Mycobacterium marinum (strain ATCC BAA-535 / M).